A 101-amino-acid chain; its full sequence is Enhancer of yellow 2 transcription factor (101 aa).

The protein belongs to the ENY2 family. In terms of assembly, component of the nuclear pore complex (NPC)-associated AMEX complex (anchoring and mRNA export complex), composed of at least e(y)2 and xmas-2. Component of the SAGA transcription coactivator-HAT complexes, at least composed of Ada2b, e(y)2, Pcaf/Gcn5, Taf10 and Nipped-A/Trrap. Within the SAGA complex, e(y)2, Sgf11, and not/nonstop form an additional subcomplex of SAGA called the DUB module (deubiquitination module). Component of the THO complex, composed of at least e(y)2, HPR1, THO2, THOC5, THOC6 and THOC7. Interacts with e(y)1. Interacts with su(Hw) (via zinc fingers). Interacts with xmas-2; required for localization to the nuclear periphery. Interacts with the nuclear pore complex (NPC).

The protein localises to the nucleus. It is found in the nucleoplasm. It localises to the cytoplasm. Functionally, involved in mRNA export coupled transcription activation by association with both the AMEX and the SAGA complexes. The SAGA complex is a multiprotein complex that activates transcription by remodeling chromatin and mediating histone acetylation and deubiquitination. Within the SAGA complex, participates in a subcomplex that specifically deubiquitinates histone H2B. The SAGA complex is recruited to specific gene promoters by activators, where it is required for transcription. Required for nuclear receptor-mediated transactivation. Involved in transcription elongation by recruiting the THO complex onto nascent mRNA. The AMEX complex functions in docking export-competent ribonucleoprotein particles (mRNPs) to the nuclear entrance of the nuclear pore complex (nuclear basket). AMEX participates in mRNA export and accurate chromatin positioning in the nucleus by tethering genes to the nuclear periphery. This Drosophila sechellia (Fruit fly) protein is Enhancer of yellow 2 transcription factor.